The following is an 88-amino-acid chain: Cytochrome c6 (88 aa).

Positions 15, 18, 19, and 61 each coordinate heme c.

This sequence belongs to the cytochrome c family. PetJ subfamily. In terms of assembly, monomer. Binds 1 heme c group covalently per subunit.

It localises to the plastid. The protein resides in the chloroplast thylakoid lumen. In terms of biological role, functions as an electron carrier between membrane-bound cytochrome b6-f and photosystem I in oxygenic photosynthesis. This Bryopsis maxima (Green alga) protein is Cytochrome c6 (petJ).